We begin with the raw amino-acid sequence, 400 residues long: MSSKLVLVLNCGSSSLKFAIIDPANGEEYLSGLAECFNLPEARIKWKMDGAKHEAALGAGAAHSEALNFIVNTILAEKPELSDQIAAIGHRIVHGGEKFTASVTINDEVIQGIKDAVPFAPLHNPAHLIGIEEAKKGFPHLADKNVAVFDTAFHQTMPEEAYLYALPYNLYKEHGIRRYGAHGTSHFFVSREAAKTLNKPVEELNVIVCHLGNGGSISAIVNGQCVDTSMGLTPLEGLVMGTRSGDIDPAIIFHLHDSLGMSVEQINKLLTKESGLLGLTEVTSDCRYIEDNYATKADAKRAMDVYCHRLAKYVGAYSALMEGRLDAIIFTGGIGENSALVREQVMKKLALLGFEYDHDRNLAARFGKSGAITTDNSRPALVIPTNEELVIAQDAARLTA.

Asn10 serves as a coordination point for Mg(2+). Lys17 is an ATP binding site. Arg91 contacts substrate. Asp150 (proton donor/acceptor) is an active-site residue. ATP-binding positions include 210-214, 285-287, and 333-337; these read HLGNG, DCR, and GIGEN. Glu387 serves as a coordination point for Mg(2+).

The protein belongs to the acetokinase family. As to quaternary structure, homodimer. Mg(2+) serves as cofactor. Requires Mn(2+) as cofactor.

The protein resides in the cytoplasm. The enzyme catalyses acetate + ATP = acetyl phosphate + ADP. The protein operates within metabolic intermediate biosynthesis; acetyl-CoA biosynthesis; acetyl-CoA from acetate: step 1/2. Its function is as follows. Catalyzes the formation of acetyl phosphate from acetate and ATP. Can also catalyze the reverse reaction. The sequence is that of Acetate kinase from Photorhabdus laumondii subsp. laumondii (strain DSM 15139 / CIP 105565 / TT01) (Photorhabdus luminescens subsp. laumondii).